The sequence spans 230 residues: Ureidoacrylate amidohydrolase RutB (230 aa).

The active-site Proton acceptor is D24. The active site involves K133. The active-site Nucleophile is the C166.

It belongs to the isochorismatase family. RutB subfamily.

The catalysed reaction is (Z)-3-ureidoacrylate + H2O + H(+) = (Z)-3-aminoacrylate + NH4(+) + CO2. The enzyme catalyses (Z)-3-ureidoacrylate + H2O = (Z)-3-aminoacrylate + carbamate + H(+). It catalyses the reaction (Z)-2-methylureidoacrylate + H2O + H(+) = (Z)-2-methylaminoacrylate + NH4(+) + CO2. Hydrolyzes ureidoacrylate to form aminoacrylate and carbamate. The carbamate hydrolyzes spontaneously, thereby releasing one of the nitrogen atoms of the pyrimidine ring as ammonia and one of its carbon atoms as CO2. In Escherichia coli O44:H18 (strain 042 / EAEC), this protein is Ureidoacrylate amidohydrolase RutB.